Here is a 636-residue protein sequence, read N- to C-terminus: MHLSEITHPNQLHGLSLRQLEDIARQIREKHLQTIAATGGHLGPGLGVVELTIALYQTLDLDRDKVLWDVGHQAYPHKLLTGRYNDFHTLRQKDGIAGYLKRCESKFDHFGAGHASTSISAGLGMALARDAKGEDFKVVSIIGDGALTGGMALEAINHAGHLPNTNIMVILNDNEMSISPNVGAISRYLNKVRLSEPVQFIADNLEEQFKNLPFFGDSLTPEMERVKEGMKRLAVPKVGAVIEELGFKYFGPIDGHNIPELIATFKQAHKVHGPVFVHVATVKGKGYEWAEKDQVGYHAQNPFNLATGKPIPSSKPKPPAYSKVFGHTLTKLAENDPRIIGITAAMATGTGLDKFQAKLPKQYIDVGIAEQHAVTLAGGLACEGMRPVVTIYSTFLQRAFDQIIHDICIQNLPVFFCMDRAGIVGADGPTHQGMYDIAYLRCIPNMTIMAPKDEAELQRMVVTGINHTSGPIAMRYPRGNGLGVPLMEEGWEALPIGKGEILRSGDDILLLGYGTMVNTSLQVAEILSEHGIEATVVNARFVKPLDTELIFPLAQRLGKVVTLEEGCLMGGFGSAVLEALQDANILVPVKRFGVPDKLVDHATPEESFADLGLTSPQIAQQVLAAFFSQKQTANVG.

Residues His-72 and 113–115 (GHA) each bind thiamine diphosphate. Asp-144 contributes to the Mg(2+) binding site. Thiamine diphosphate is bound by residues 145–146 (GA), Asn-174, Tyr-287, and Glu-370. Asn-174 is a Mg(2+) binding site.

It belongs to the transketolase family. DXPS subfamily. Homodimer. It depends on Mg(2+) as a cofactor. The cofactor is thiamine diphosphate.

It catalyses the reaction D-glyceraldehyde 3-phosphate + pyruvate + H(+) = 1-deoxy-D-xylulose 5-phosphate + CO2. The protein operates within metabolic intermediate biosynthesis; 1-deoxy-D-xylulose 5-phosphate biosynthesis; 1-deoxy-D-xylulose 5-phosphate from D-glyceraldehyde 3-phosphate and pyruvate: step 1/1. Catalyzes the acyloin condensation reaction between C atoms 2 and 3 of pyruvate and glyceraldehyde 3-phosphate to yield 1-deoxy-D-xylulose-5-phosphate (DXP). The sequence is that of 1-deoxy-D-xylulose-5-phosphate synthase from Microcystis aeruginosa (strain NIES-843 / IAM M-2473).